A 425-amino-acid chain; its full sequence is 5-methylthioadenosine/S-adenosylhomocysteine deaminase (425 aa).

Residues His63 and His65 each contribute to the Zn(2+) site. Substrate is bound by residues Glu92 and His184. His211 is a binding site for Zn(2+). Glu214 and Asp299 together coordinate substrate. Asp299 contributes to the Zn(2+) binding site.

This sequence belongs to the metallo-dependent hydrolases superfamily. MTA/SAH deaminase family. It depends on Zn(2+) as a cofactor.

The catalysed reaction is S-adenosyl-L-homocysteine + H2O + H(+) = S-inosyl-L-homocysteine + NH4(+). It catalyses the reaction S-methyl-5'-thioadenosine + H2O + H(+) = S-methyl-5'-thioinosine + NH4(+). In terms of biological role, catalyzes the deamination of 5-methylthioadenosine and S-adenosyl-L-homocysteine into 5-methylthioinosine and S-inosyl-L-homocysteine, respectively. Is also able to deaminate adenosine. This is 5-methylthioadenosine/S-adenosylhomocysteine deaminase from Pyrococcus abyssi (strain GE5 / Orsay).